Consider the following 355-residue polypeptide: Cytoplasmic tRNA 2-thiolation protein 1 (355 aa).

The tract at residues 320-341 is disordered; sequence GIGRPRGVNGDHNKETKKPGSV. Basic and acidic residues predominate over residues 328–337; the sequence is NGDHNKETKK.

It belongs to the TtcA family. CTU1/NCS6/ATPBD3 subfamily.

The protein localises to the cytoplasm. It functions in the pathway tRNA modification; 5-methoxycarbonylmethyl-2-thiouridine-tRNA biosynthesis. Its function is as follows. Plays a central role in 2-thiolation of mcm(5)S(2)U at tRNA wobble positions of tRNA(Lys), tRNA(Glu) and tRNA(Gln). Directly binds tRNAs and probably acts by catalyzing adenylation of tRNAs, an intermediate required for 2-thiolation. It is unclear whether it acts as a sulfurtransferase that transfers sulfur from thiocarboxylated URM1 onto the uridine of tRNAs at wobble position. The chain is Cytoplasmic tRNA 2-thiolation protein 1 from Arabidopsis thaliana (Mouse-ear cress).